A 459-amino-acid chain; its full sequence is MSNKAWGGRFEVQPEEWVDDFNASITFDQTLIDQDIEGSIAHATMLANQGIISQQDSEQIIQGLKSIQHDYHQDQIQFSASLEDIHLNIEHELIKRIGDAGGKLHTGRSRNDQVATDMHLYTKKQVQDIIALIKSLQSVIVDIASNNVDTIMPGYTHLQRAQPISFAHHIMTYFWMLQRDQQRFEDSLKRIDINPLGAAALSGTTYPIDRHETTALLNFGSLYENSLDAVSDRDYIIETLHNISLTMVHLSRFAEEIIFWSTDEAKFITLSDAFSTGSSIMPQKKNPDMAELIRGKVGRTTGHLMSMLMTLKGLPLAYNKDMQEDKEGLFDAVHTIKGSLRIFEGMIQTMTINKERLNQTVKEDFSNATELADYLVTKNIPFRTAHEIVGKIVLECIQQGHYLLDVPLATYQQHHSSIDADIYDYLQPENCLKRRQSYGSTGQSSVKQQLDVAKQLLSQ.

Belongs to the lyase 1 family. Argininosuccinate lyase subfamily.

It is found in the cytoplasm. The enzyme catalyses 2-(N(omega)-L-arginino)succinate = fumarate + L-arginine. Its pathway is amino-acid biosynthesis; L-arginine biosynthesis; L-arginine from L-ornithine and carbamoyl phosphate: step 3/3. The protein is Argininosuccinate lyase of Staphylococcus aureus (strain Mu3 / ATCC 700698).